Reading from the N-terminus, the 84-residue chain is Small ribosomal subunit protein bS20 (84 aa).

The protein belongs to the bacterial ribosomal protein bS20 family.

Binds directly to 16S ribosomal RNA. This Parabacteroides distasonis (strain ATCC 8503 / DSM 20701 / CIP 104284 / JCM 5825 / NCTC 11152) protein is Small ribosomal subunit protein bS20.